The chain runs to 199 residues: Altered inheritance of mitochondria protein 11 (199 aa).

2 helical membrane-spanning segments follow: residues 79–101 and 129–151; these read MALF…RGVI and VFHS…LWYY.

This sequence belongs to the AIM11 family.

The protein resides in the membrane. In Komagataella phaffii (strain GS115 / ATCC 20864) (Yeast), this protein is Altered inheritance of mitochondria protein 11 (AIM11).